The following is a 348-amino-acid chain: MNDRLLRAARRQPTDTTPVWLMRQAGRYLPEYRAIRGNIAFLDLCKHPDLAAEVTVQPVTRLGVDAAIIFSDILIPVEAMGITLELGDKGPHFPDPVRSAADIDKLGVPDPVEGTGFVAEAIRRTRKALNDSVPVIGFAGAPFTLAAYMVEGGGSKSYILIKRLMFEQPELAHRLFGKLTDTLIPYLKMQVEAGASIVQIFDSWGGALSPWDYERFCIPYLKRMVSELKATGVPVIVFGVGMSSHLSLLKSTGADVVGLDWTLPMDEGRKVLGPDVAVQGNLDPLHLFLPREELDGRVKDILRRAGPEGHIFNLGHGILPPTDPDAAKFLVEAVHRHGVALRQGTLGA.

Residues 23–27 (RQAGR), Asp72, Tyr148, Ser203, and His316 contribute to the substrate site.

This sequence belongs to the uroporphyrinogen decarboxylase family. In terms of assembly, homodimer.

The protein localises to the cytoplasm. It catalyses the reaction uroporphyrinogen III + 4 H(+) = coproporphyrinogen III + 4 CO2. It functions in the pathway porphyrin-containing compound metabolism; protoporphyrin-IX biosynthesis; coproporphyrinogen-III from 5-aminolevulinate: step 4/4. Catalyzes the decarboxylation of four acetate groups of uroporphyrinogen-III to yield coproporphyrinogen-III. In Myxococcus xanthus (strain DK1622), this protein is Uroporphyrinogen decarboxylase.